A 596-amino-acid chain; its full sequence is Aspartate--tRNA(Asp/Asn) ligase (596 aa).

An L-aspartate-binding site is contributed by glutamate 175. The aspartate stretch occupies residues 199 to 202 (QQYK). Residues arginine 221 and histidine 454 each coordinate L-aspartate. An ATP-binding site is contributed by 221–223 (RDE). Glutamate 488 serves as a coordination point for ATP. Arginine 495 contacts L-aspartate. Position 540–543 (540–543 (GIDR)) interacts with ATP.

This sequence belongs to the class-II aminoacyl-tRNA synthetase family. Type 1 subfamily. As to quaternary structure, homodimer.

Its subcellular location is the cytoplasm. The catalysed reaction is tRNA(Asx) + L-aspartate + ATP = L-aspartyl-tRNA(Asx) + AMP + diphosphate. Its function is as follows. Aspartyl-tRNA synthetase with relaxed tRNA specificity since it is able to aspartylate not only its cognate tRNA(Asp) but also tRNA(Asn). Reaction proceeds in two steps: L-aspartate is first activated by ATP to form Asp-AMP and then transferred to the acceptor end of tRNA(Asp/Asn). The chain is Aspartate--tRNA(Asp/Asn) ligase from Mesorhizobium japonicum (strain LMG 29417 / CECT 9101 / MAFF 303099) (Mesorhizobium loti (strain MAFF 303099)).